Here is a 223-residue protein sequence, read N- to C-terminus: N-(5'-phosphoribosyl)anthranilate isomerase (223 aa).

Belongs to the TrpF family.

It catalyses the reaction N-(5-phospho-beta-D-ribosyl)anthranilate = 1-(2-carboxyphenylamino)-1-deoxy-D-ribulose 5-phosphate. Its pathway is amino-acid biosynthesis; L-tryptophan biosynthesis; L-tryptophan from chorismate: step 3/5. The chain is N-(5'-phosphoribosyl)anthranilate isomerase from Moorella thermoacetica (strain ATCC 39073 / JCM 9320).